We begin with the raw amino-acid sequence, 729 residues long: MKKKNLITAALPYVNNIPHLGNLVQVLSADAFARYSRMMGIETLYVCGTDEYGTATETKALIEKTTPEELCNKYYEIHKSIYEWFNIKFDIFGRTTNKRHKETVQDLFLKLEKNGYTTEKESEQFFCKQDQMFLADRYVTGECPNCGNNAKGDQCENCSKLLSPTDLINPKCIICKNIPIIKTTKHIYIDLPKIKDELSHWMQITELNTNWNTNAIKITNAFLRDGLKERAITRDLKWGIPVPKKEYENKVFYVWFDAPIGYISITKEISKDWESWWKNNEETNLVQFIGKDNILFHTVIFPSIALGSKENWTMLSKLASSEYLNYENLKFSKSAGTGIFGNDVITTGIPSDIWRFYIYYNRPEKSDFQFMWDDFMERVNSELIGNFSNLVNRVLTFYKKFFGDQIDKIEIKEDFWQEINLKYDKTLNFFKQVELKSALKEILDISRTGNKIFQDKEPWKTKDSTPQKTKELLLNLIYLIRDLSILISPFIPHTSDKIRRFFGNSYEISNRFLGTNLGLSTIQFTEVLFIKLEKHLINSLKLKYSGSKNMQDEQTSNQINPINLFSEQVCLKVVQVKTIERNPDAEKLFILKLNDGSSDGKQIVSSLADYYKEEELIGKHIIIVDNLKPAKFRGIKSEGMLIATEDKDKNFKVIIVEDFKDNPIPGERIILESDSYKELKSPAKISIDKFFKTQIVAENGELKINGINLILEHSKEKILSIEIPNGKVY.

The short motif at 12–22 (PYVNNIPHLGN) is the 'HIGH' region element. 4 residues coordinate Zn(2+): C143, C146, C155, and C158. A 'KMSKS' region motif is present at residues 330 to 334 (KFSKS). Position 333 (K333) interacts with ATP. Residues 565–670 (FSEQVCLKVV…DNPIPGERII (106 aa)) enclose the tRNA-binding domain.

The protein belongs to the class-I aminoacyl-tRNA synthetase family. MetG type 1 subfamily. In terms of assembly, homodimer. It depends on Zn(2+) as a cofactor.

It localises to the cytoplasm. The enzyme catalyses tRNA(Met) + L-methionine + ATP = L-methionyl-tRNA(Met) + AMP + diphosphate. Functionally, is required not only for elongation of protein synthesis but also for the initiation of all mRNA translation through initiator tRNA(fMet) aminoacylation. The chain is Methionine--tRNA ligase from Borrelia hermsii (strain HS1 / DAH).